A 304-amino-acid polypeptide reads, in one-letter code: Porphobilinogen deaminase (304 aa).

Cysteine 241 bears the S-(dipyrrolylmethanemethyl)cysteine mark.

The protein belongs to the HMBS family. In terms of assembly, monomer. Requires dipyrromethane as cofactor.

The catalysed reaction is 4 porphobilinogen + H2O = hydroxymethylbilane + 4 NH4(+). It functions in the pathway porphyrin-containing compound metabolism; protoporphyrin-IX biosynthesis; coproporphyrinogen-III from 5-aminolevulinate: step 2/4. In terms of biological role, tetrapolymerization of the monopyrrole PBG into the hydroxymethylbilane pre-uroporphyrinogen in several discrete steps. This chain is Porphobilinogen deaminase, found in Vesicomyosocius okutanii subsp. Calyptogena okutanii (strain HA).